Here is an 88-residue protein sequence, read N- to C-terminus: ATP synthase subunit c 2 (88 aa).

Helical transmembrane passes span 4 to 24 (FSWV…GTGI) and 53 to 73 (IGLA…MIIL).

The protein belongs to the ATPase C chain family. As to quaternary structure, F-type ATPases have 2 components, F(1) - the catalytic core - and F(0) - the membrane proton channel. F(1) has five subunits: alpha(3), beta(3), gamma(1), delta(1), epsilon(1). F(0) has three main subunits: a(1), b(2) and c(10-14). The alpha and beta chains form an alternating ring which encloses part of the gamma chain. F(1) is attached to F(0) by a central stalk formed by the gamma and epsilon chains, while a peripheral stalk is formed by the delta and b chains.

It localises to the cell inner membrane. F(1)F(0) ATP synthase produces ATP from ADP in the presence of a proton or sodium gradient. F-type ATPases consist of two structural domains, F(1) containing the extramembraneous catalytic core and F(0) containing the membrane proton channel, linked together by a central stalk and a peripheral stalk. During catalysis, ATP synthesis in the catalytic domain of F(1) is coupled via a rotary mechanism of the central stalk subunits to proton translocation. Functionally, key component of the F(0) channel; it plays a direct role in translocation across the membrane. A homomeric c-ring of between 10-14 subunits forms the central stalk rotor element with the F(1) delta and epsilon subunits. The chain is ATP synthase subunit c 2 from Syntrophotalea carbinolica (strain DSM 2380 / NBRC 103641 / GraBd1) (Pelobacter carbinolicus).